Consider the following 196-residue polypeptide: MIIKSSEYAVSAVKEEQYPKDNLPEIALAGRSNVGKSSLINTLLKRKNLARTSSQPGKTQTLNFYLVNDDFYLVDVPGYGYAKVSQKRRQEFGEMIQDYLETRPNLKGLIILIDSRHEPTKDDISMYEYAQYLNIPILVVCTKMDKIKKNQTNKVMTGLRKKLDLNYDHVTVLTFSSVTKFHVTELGNWIEDKISQ.

The 175-residue stretch at 22 to 196 (NLPEIALAGR…GNWIEDKISQ (175 aa)) folds into the EngB-type G domain. Residues 30-37 (GRSNVGKS), 57-61 (GKTQT), 75-78 (DVPG), 142-145 (TKMD), and 175-177 (FSS) contribute to the GTP site. The Mg(2+) site is built by Ser-37 and Thr-59.

This sequence belongs to the TRAFAC class TrmE-Era-EngA-EngB-Septin-like GTPase superfamily. EngB GTPase family. Mg(2+) is required as a cofactor.

Its function is as follows. Necessary for normal cell division and for the maintenance of normal septation. This chain is Probable GTP-binding protein EngB, found in Lactobacillus acidophilus (strain ATCC 700396 / NCK56 / N2 / NCFM).